The primary structure comprises 508 residues: Photosystem II CP47 reaction center protein (508 aa).

6 consecutive transmembrane segments (helical) span residues 21–36 (AVHLMHTALVSGWAGS), 101–115 (IVLSGLLFLAAIWHW), 140–156 (GIHLFLSGVLCFAFGAF), 203–218 (IAAGILGILAGLFHLS), 237–252 (VLSSSIAAVFFAAFVV), and 457–472 (TFALLFFFGHIWHGAR).

It belongs to the PsbB/PsbC family. PsbB subfamily. PSII is composed of 1 copy each of membrane proteins PsbA, PsbB, PsbC, PsbD, PsbE, PsbF, PsbH, PsbI, PsbJ, PsbK, PsbL, PsbM, PsbT, PsbX, PsbY, PsbZ, Psb30/Ycf12, at least 3 peripheral proteins of the oxygen-evolving complex and a large number of cofactors. It forms dimeric complexes. It depends on Binds multiple chlorophylls. PSII binds additional chlorophylls, carotenoids and specific lipids. as a cofactor.

The protein localises to the plastid. It localises to the chloroplast thylakoid membrane. Its function is as follows. One of the components of the core complex of photosystem II (PSII). It binds chlorophyll and helps catalyze the primary light-induced photochemical processes of PSII. PSII is a light-driven water:plastoquinone oxidoreductase, using light energy to abstract electrons from H(2)O, generating O(2) and a proton gradient subsequently used for ATP formation. The chain is Photosystem II CP47 reaction center protein from Marchantia polymorpha (Common liverwort).